An 823-amino-acid chain; its full sequence is Spindle pole body component SPC97 (823 aa).

It belongs to the TUBGCP family. In terms of assembly, interacts with TUB4, SPC72 and SPC98.

Its subcellular location is the nucleus. The protein localises to the cytoplasm. It is found in the cytoskeleton. The protein resides in the microtubule organizing center. It localises to the spindle pole body. Involved in microtubule organization by the microtubule organizing center, the spindle pole body (SPB). Probably part of the microtubule attachment site at the SPB. In Saccharomyces cerevisiae (strain ATCC 204508 / S288c) (Baker's yeast), this protein is Spindle pole body component SPC97 (SPC97).